The chain runs to 744 residues: Phosphoribosylformylglycinamidine synthase subunit PurL (744 aa).

The active site involves H50. The ATP site is built by Y53 and K92. A Mg(2+)-binding site is contributed by E94. Substrate contacts are provided by residues S95–H98 and R117. H96 serves as the catalytic Proton acceptor. Residue D118 participates in Mg(2+) binding. Q241 is a binding site for substrate. Residue D269 coordinates Mg(2+). Substrate is bound at residue E313 to Q315. Residues D495 and G532 each coordinate ATP. Mg(2+) is bound at residue N533. S535 contacts substrate.

Belongs to the FGAMS family. In terms of assembly, monomer. Part of the FGAM synthase complex composed of 1 PurL, 1 PurQ and 2 PurS subunits.

The protein localises to the cytoplasm. It carries out the reaction N(2)-formyl-N(1)-(5-phospho-beta-D-ribosyl)glycinamide + L-glutamine + ATP + H2O = 2-formamido-N(1)-(5-O-phospho-beta-D-ribosyl)acetamidine + L-glutamate + ADP + phosphate + H(+). Its pathway is purine metabolism; IMP biosynthesis via de novo pathway; 5-amino-1-(5-phospho-D-ribosyl)imidazole from N(2)-formyl-N(1)-(5-phospho-D-ribosyl)glycinamide: step 1/2. In terms of biological role, part of the phosphoribosylformylglycinamidine synthase complex involved in the purines biosynthetic pathway. Catalyzes the ATP-dependent conversion of formylglycinamide ribonucleotide (FGAR) and glutamine to yield formylglycinamidine ribonucleotide (FGAM) and glutamate. The FGAM synthase complex is composed of three subunits. PurQ produces an ammonia molecule by converting glutamine to glutamate. PurL transfers the ammonia molecule to FGAR to form FGAM in an ATP-dependent manner. PurS interacts with PurQ and PurL and is thought to assist in the transfer of the ammonia molecule from PurQ to PurL. This Rhizobium johnstonii (strain DSM 114642 / LMG 32736 / 3841) (Rhizobium leguminosarum bv. viciae) protein is Phosphoribosylformylglycinamidine synthase subunit PurL.